Here is a 723-residue protein sequence, read N- to C-terminus: Polyribonucleotide nucleotidyltransferase (723 aa).

Residues D487 and D493 each contribute to the Mg(2+) site. Positions 554 to 613 constitute a KH domain; it reads PKILIMHINPDKIREVIGPSGKQINKIIDETGVKIDIEQDGTIFISSVDEAANQKAKQII. In terms of domain architecture, S1 motif spans 623–691; the sequence is GQVYLGKVKR…KQGRVNLSRK (69 aa). A disordered region spans residues 702-723; that stretch reads GELPRESREKRGRRPERHRMKP. Over residues 711–723 the composition is skewed to basic residues; the sequence is KRGRRPERHRMKP.

The protein belongs to the polyribonucleotide nucleotidyltransferase family. It depends on Mg(2+) as a cofactor.

The protein localises to the cytoplasm. It carries out the reaction RNA(n+1) + phosphate = RNA(n) + a ribonucleoside 5'-diphosphate. Involved in mRNA degradation. Catalyzes the phosphorolysis of single-stranded polyribonucleotides processively in the 3'- to 5'-direction. The protein is Polyribonucleotide nucleotidyltransferase of Geobacillus kaustophilus (strain HTA426).